We begin with the raw amino-acid sequence, 194 residues long: Probable GTP-binding protein EngB (194 aa).

In terms of domain architecture, EngB-type G spans 19 to 193 (DCIQICFWGR…VLFIEENIFK (175 aa)). GTP contacts are provided by residues 27–34 (GRSNVGKS), 53–57 (GRTQF), 70–73 (DLPG), 137–140 (TKID), and 172–174 (VSS). Mg(2+) is bound by residues Ser34 and Thr55.

This sequence belongs to the TRAFAC class TrmE-Era-EngA-EngB-Septin-like GTPase superfamily. EngB GTPase family. It depends on Mg(2+) as a cofactor.

Its function is as follows. Necessary for normal cell division and for the maintenance of normal septation. The polypeptide is Probable GTP-binding protein EngB (Mycoplasmopsis agalactiae (strain NCTC 10123 / CIP 59.7 / PG2) (Mycoplasma agalactiae)).